We begin with the raw amino-acid sequence, 324 residues long: Beta-ketoacyl-[acyl-carrier-protein] synthase III (324 aa).

Active-site residues include C112 and H251. The interval Q252 to R256 is ACP-binding. The active site involves N281.

It belongs to the thiolase-like superfamily. FabH family. In terms of assembly, homodimer.

The protein localises to the cytoplasm. The enzyme catalyses malonyl-[ACP] + acetyl-CoA + H(+) = 3-oxobutanoyl-[ACP] + CO2 + CoA. The protein operates within lipid metabolism; fatty acid biosynthesis. Functionally, catalyzes the condensation reaction of fatty acid synthesis by the addition to an acyl acceptor of two carbons from malonyl-ACP. Catalyzes the first condensation reaction which initiates fatty acid synthesis and may therefore play a role in governing the total rate of fatty acid production. Possesses both acetoacetyl-ACP synthase and acetyl transacylase activities. Its substrate specificity determines the biosynthesis of branched-chain and/or straight-chain of fatty acids. In Desulfotalea psychrophila (strain LSv54 / DSM 12343), this protein is Beta-ketoacyl-[acyl-carrier-protein] synthase III.